A 202-amino-acid chain; its full sequence is Putative 3-methyladenine DNA glycosylase (202 aa).

It belongs to the DNA glycosylase MPG family.

The protein is Putative 3-methyladenine DNA glycosylase of Staphylococcus aureus (strain MRSA252).